Reading from the N-terminus, the 291-residue chain is 4,5:9,10-diseco-3-hydroxy-5,9,17-trioxoandrosta-1(10),2-diene-4-oate hydrolase (291 aa).

Substrate contacts are provided by residues 45–46 (GG), Asn54, Asn113, Leu115, and Arg192. His269 serves as the catalytic Proton acceptor. Trp270 is a substrate binding site.

Belongs to the AB hydrolase superfamily. HsaD family. As to quaternary structure, homodimer.

The catalysed reaction is (1E,2Z)-3-hydroxy-5,9,17-trioxo-4,5:9,10-disecoandrosta-1(10),2-dien-4-oate + H2O = 3-[(3aS,4S,7aS)-7a-methyl-1,5-dioxo-octahydro-1H-inden-4-yl]propanoate + (2Z,4Z)-2-hydroxyhexa-2,4-dienoate + H(+). The enzyme catalyses 2,6-dioxo-6-phenylhexa-3-enoate + H2O = 2-oxopent-4-enoate + benzoate + H(+). It participates in lipid metabolism; steroid biosynthesis. Functionally, catalyzes the hydrolysis of a carbon-carbon bond in 4,5: 9,10-diseco-3-hydroxy-5,9,17-trioxoandrosta-1(10),2-diene-4-oate (4,9-DSHA) to yield 9,17-dioxo-1,2,3,4,10,19-hexanorandrostan-5-oate (DOHNAA) and 2-hydroxy-hexa-2,4-dienoate (HHD). Is also able to catalyze the hydrolysis of 2-hydroxy-6-oxo-6-phenylhexa-2,4-dienoic acid (HOPDA) and the synthetic analog 8-(2-chlorophenyl)-2-hydroxy-5-methyl-6-oxoocta-2,4-dienoic acid (HOPODA). This chain is 4,5:9,10-diseco-3-hydroxy-5,9,17-trioxoandrosta-1(10),2-diene-4-oate hydrolase (hsaD), found in Mycobacterium tuberculosis (strain ATCC 25618 / H37Rv).